A 103-amino-acid chain; its full sequence is Small ribosomal subunit protein uS14c (103 aa).

The interval 34–56 is disordered; the sequence is KVSPLSLSEKTKMREKLQSLPRN.

Belongs to the universal ribosomal protein uS14 family. As to quaternary structure, part of the 30S ribosomal subunit.

It is found in the plastid. The protein localises to the chloroplast. Its function is as follows. Binds 16S rRNA, required for the assembly of 30S particles. In Brachypodium distachyon (Purple false brome), this protein is Small ribosomal subunit protein uS14c.